Consider the following 308-residue polypeptide: Oxygen-dependent coproporphyrinogen-III oxidase (308 aa).

Ser-97 contributes to the substrate binding site. A divalent metal cation-binding residues include His-101 and His-111. The active-site Proton donor is the His-111. 113 to 115 (NVR) is a substrate binding site. 2 residues coordinate a divalent metal cation: His-153 and His-183. Positions 248–283 (YVEFNLVWDRGTHFGLQSGGRTESILMSMPPLASWS) are important for dimerization. 266 to 268 (GGR) serves as a coordination point for substrate.

This sequence belongs to the aerobic coproporphyrinogen-III oxidase family. Homodimer. The cofactor is a divalent metal cation.

The protein resides in the cytoplasm. It carries out the reaction coproporphyrinogen III + O2 + 2 H(+) = protoporphyrinogen IX + 2 CO2 + 2 H2O. Its pathway is porphyrin-containing compound metabolism; protoporphyrin-IX biosynthesis; protoporphyrinogen-IX from coproporphyrinogen-III (O2 route): step 1/1. Functionally, involved in the heme biosynthesis. Catalyzes the aerobic oxidative decarboxylation of propionate groups of rings A and B of coproporphyrinogen-III to yield the vinyl groups in protoporphyrinogen-IX. In Polaromonas sp. (strain JS666 / ATCC BAA-500), this protein is Oxygen-dependent coproporphyrinogen-III oxidase.